The primary structure comprises 77 residues: U14-theraphotoxin-Cg1a 1 (77 aa).

The signal sequence occupies residues 1–21 (MKTSVLLVILGIAAITVQCTA). A propeptide spanning residues 22-49 (SESVEQDSLRTFVDAVLGWNAEMASEAR) is cleaved from the precursor. 3 disulfide bridges follow: cysteine 50-cysteine 64, cysteine 57-cysteine 69, and cysteine 63-cysteine 75. Position 77 is a lysine amide (lysine 77).

This sequence belongs to the neurotoxin 10 (Hwtx-1) family. 65 (Jztx-21) subfamily. In terms of tissue distribution, expressed by the venom gland.

The protein localises to the secreted. Functionally, probable ion channel inhibitor. In Chilobrachys guangxiensis (Chinese earth tiger tarantula), this protein is U14-theraphotoxin-Cg1a 1.